A 235-amino-acid chain; its full sequence is High affinity immunoglobulin epsilon receptor subunit beta (235 aa).

The disordered stretch occupies residues 1–23; that stretch reads MDTENRSRADLALPNPQESSSAP. Over 1–51 the chain is Cytoplasmic; that stretch reads MDTENRSRADLALPNPQESSSAPDIELLEASPAKAAPPKQTWRTFLKKELE. The chain crosses the membrane as a helical span at residues 52–71; that stretch reads FLGATQILVGLICLCFGTIV. The Extracellular portion of the chain corresponds to 72 to 89; sequence CSVLYVSDFDEEVLLLYK. The chain crosses the membrane as a helical span at residues 90–109; that stretch reads LGYPFWGAVLFVLSGFLSII. Topologically, residues 110-122 are cytoplasmic; that stretch reads SERKNTLYLVRGS. The helical transmembrane segment at 123–142 threads the bilayer; that stretch reads LGANIVSSIAAGTGIAMLIL. Residues 143–171 lie on the Extracellular side of the membrane; that stretch reads NLTNNFAYMNNCKNVTEDDGCFVASFTTE. A helical transmembrane segment spans residues 172-191; sequence LVLMMLFLTILAFCSAVLFT. Residues 192 to 235 lie on the Cytoplasmic side of the membrane; that stretch reads IYRIGQELESKKVPDDRLYEELNVYSPIYSELEDKGETSSPVDS. Residues tyrosine 210 and tyrosine 216 each carry the phosphotyrosine modification. Serine 217 is modified (phosphoserine). Tyrosine 220 carries the phosphotyrosine modification.

It belongs to the MS4A family. Tetramer of an alpha chain, a beta chain, and two disulfide linked gamma chains. Binds LILRB1. Interacts with FGR. Interacts with FGR and FES/FPS. Interacts with LYN. Post-translationally, phosphorylated on tyrosine residues by LYN.

It localises to the membrane. Its function is as follows. High affinity receptor that binds to the Fc region of immunoglobulins epsilon. Aggregation of FCER1 by multivalent antigens is required for the full mast cell response, including the release of preformed mediators (such as histamine) by degranulation and de novo production of lipid mediators and cytokines. Also mediates the secretion of important lymphokines. Binding of allergen to receptor-bound IgE leads to cell activation and the release of mediators responsible for the manifestations of allergy. The chain is High affinity immunoglobulin epsilon receptor subunit beta (Ms4a2) from Mus musculus (Mouse).